The sequence spans 175 residues: Urease accessory protein UreE (175 aa).

Residues 151–175 (GGAYGGSPSHAHRHSHVHSHSHETP) form a disordered region. Over residues 160-169 (HAHRHSHVHS) the composition is skewed to basic residues.

Belongs to the UreE family.

The protein resides in the cytoplasm. Involved in urease metallocenter assembly. Binds nickel. Probably functions as a nickel donor during metallocenter assembly. This is Urease accessory protein UreE from Synechococcus sp. (strain WH7805).